A 403-amino-acid polypeptide reads, in one-letter code: MSKFNRIHLVVLDSVGIGAAPDANNFVNAGVPDGASDTLGHISKTVGLNVPNMAKIGLGNIPRETPLKTVAAEINPTGYATKLEEVSLGKDTMTGHWEIMGLNITEPFDTFWNGFPEEILTKIEEFSGRKVIREANKPYSGTAVIDDFGPRQMETGELIIYTSADPVLQIAAHEDIIPLDELYRICEYARSITLERPALLGRIIARPYVGEPGNFTRTANRRDLAVSPFSPTVLDKLNEADIDTYAVGKINDIFNGAGINHDMGHNKSNSHGIDTLLKTMGLAEFEKGFSFTNLVDFDALYGHRRNAHGYRDCLHEFDERLPEIIAAMRENDLLLITADHGNDPTYAGTDHTREYIPLLAYSPAFKGNGLIPVGHFADISATVADNFGVETAMIGESFLDKLV.

Mn(2+)-binding residues include aspartate 13, aspartate 298, histidine 303, aspartate 339, histidine 340, and histidine 351.

It belongs to the phosphopentomutase family. Mn(2+) serves as cofactor.

Its subcellular location is the cytoplasm. The enzyme catalyses 2-deoxy-alpha-D-ribose 1-phosphate = 2-deoxy-D-ribose 5-phosphate. It catalyses the reaction alpha-D-ribose 1-phosphate = D-ribose 5-phosphate. Its pathway is carbohydrate degradation; 2-deoxy-D-ribose 1-phosphate degradation; D-glyceraldehyde 3-phosphate and acetaldehyde from 2-deoxy-alpha-D-ribose 1-phosphate: step 1/2. Its function is as follows. Isomerase that catalyzes the conversion of deoxy-ribose 1-phosphate (dRib-1-P) and ribose 1-phosphate (Rib-1-P) to deoxy-ribose 5-phosphate (dRib-5-P) and ribose 5-phosphate (Rib-5-P), respectively. This chain is Phosphopentomutase, found in Streptococcus pneumoniae serotype 19F (strain G54).